The following is an 871-amino-acid chain: uncharacterized protein (871 aa).

Transmembrane regions (helical) follow at residues 11 to 31 (AFVS…GLFL), 92 to 112 (YLFT…PILL), 139 to 159 (FYAH…IIYR), 380 to 400 (TILT…GCIS), 422 to 442 (LLGI…MSLV), 475 to 495 (VQVF…VQVI), 520 to 540 (FLLQ…TLLL), 562 to 582 (LSAP…TIMI), 586 to 606 (IIAP…YFAY), 629 to 649 (LFQV…LFVL), and 653 to 673 (WGAT…HLYF). Phosphoserine is present on residues Ser725, Ser726, Ser727, Ser729, Ser737, and Ser761. A compositionally biased stretch (polar residues) spans 727-740 (SGSDEFLETSSRTS). The interval 727–746 (SGSDEFLETSSRTSENTKEK) is disordered.

It belongs to the CSC1 (TC 1.A.17) family.

Its subcellular location is the golgi apparatus membrane. Functionally, acts as an osmosensitive calcium-permeable cation channel. This is an uncharacterized protein from Schizosaccharomyces pombe (strain 972 / ATCC 24843) (Fission yeast).